A 290-amino-acid chain; its full sequence is Nucleoid occlusion protein (290 aa).

A DNA-binding region (H-T-H motif) is located at residues 153 to 172 (EALAQRLGKGQSTIANKLRL).

It belongs to the ParB family.

Its subcellular location is the cytoplasm. The protein resides in the nucleoid. In terms of biological role, effects nucleoid occlusion by binding relatively nonspecifically to DNA and preventing the assembly of the division machinery in the vicinity of the nucleoid, especially under conditions that disturb the cell cycle. It helps to coordinate cell division and chromosome segregation by preventing the formation of the Z ring through the nucleoid, which would cause chromosome breakage. In Bacillus anthracis (strain A0248), this protein is Nucleoid occlusion protein.